The sequence spans 293 residues: tRNA(His) guanylyltransferase (293 aa).

Residues D29, G30, and D76 each coordinate Mg(2+). GTP contacts are provided by residues D29–T34 and S75–D76. The tract at residues K226 to K252 is disordered.

Belongs to the tRNA(His) guanylyltransferase family. Mg(2+) serves as cofactor.

The enzyme catalyses a 5'-end ribonucleotide-tRNA(His) + GTP + ATP + H2O = a 5'-end phospho-guanosine-ribonucleotide-tRNA(His) + AMP + 2 diphosphate + H(+). In terms of biological role, adds a GMP to the 5'-end of tRNA(His) after transcription and RNase P cleavage. The protein is tRNA(His) guanylyltransferase (rgt-1) of Neurospora crassa (strain ATCC 24698 / 74-OR23-1A / CBS 708.71 / DSM 1257 / FGSC 987).